Here is a 687-residue protein sequence, read N- to C-terminus: Mu-like prophage FluMu transposase A (687 aa).

The HTH Mu-type domain maps to 8 to 74; it reads THYSVYELAN…ELLLKTTPEQ (67 aa). The H-T-H motif DNA-binding region spans 398–417; sequence PIERAFSHGGLGDYVDKHLL.

This transposase is essential for integration, replication-transposition, and excision of Mu-like viral DNA. This chain is Mu-like prophage FluMu transposase A, found in Haemophilus influenzae (strain ATCC 51907 / DSM 11121 / KW20 / Rd).